The following is a 401-amino-acid chain: Argininosuccinate synthase (401 aa).

ATP-binding positions include 10–18 (AYSGGVDTS) and A38. Y89 is an L-citrulline binding site. G119 is an ATP binding site. L-aspartate is bound by residues T121, N125, and D126. N125 serves as a coordination point for L-citrulline. Residues R129, S177, S186, E262, and Y274 each coordinate L-citrulline.

The protein belongs to the argininosuccinate synthase family. Type 1 subfamily. As to quaternary structure, homotetramer.

The protein resides in the cytoplasm. The enzyme catalyses L-citrulline + L-aspartate + ATP = 2-(N(omega)-L-arginino)succinate + AMP + diphosphate + H(+). It participates in amino-acid biosynthesis; L-arginine biosynthesis; L-arginine from L-ornithine and carbamoyl phosphate: step 2/3. This chain is Argininosuccinate synthase, found in Synechococcus sp. (strain WH7803).